Reading from the N-terminus, the 235-residue chain is 7-cyano-7-deazaguanine synthase (235 aa).

7 to 17 (CSGGLDSVSLA) provides a ligand contact to ATP. 4 residues coordinate Zn(2+): C185, C193, C196, and C199.

This sequence belongs to the QueC family. It depends on Zn(2+) as a cofactor.

The enzyme catalyses 7-carboxy-7-deazaguanine + NH4(+) + ATP = 7-cyano-7-deazaguanine + ADP + phosphate + H2O + H(+). It participates in purine metabolism; 7-cyano-7-deazaguanine biosynthesis. Catalyzes the ATP-dependent conversion of 7-carboxy-7-deazaguanine (CDG) to 7-cyano-7-deazaguanine (preQ(0)). The polypeptide is 7-cyano-7-deazaguanine synthase (Allorhizobium ampelinum (strain ATCC BAA-846 / DSM 112012 / S4) (Agrobacterium vitis (strain S4))).